The sequence spans 1198 residues: Regulator of G-protein signaling 3 (1198 aa).

A C2 domain is found at 137-256 (GAGQLRLSID…TPDKEISGWY (120 aa)). In terms of domain architecture, PDZ spans 299–376 (KITIPRGKDG…EIILLVWRMV (78 aa)). The residue at position 448 (arginine 448) is an Omega-N-methylarginine. The disordered stretch occupies residues 669–933 (QQLAASPPDS…GAEGGLSLRV (265 aa)). Phosphoserine is present on serine 674. A compositionally biased stretch (basic and acidic residues) spans 679–697 (KMFETEADEKREMALEEGK). A compositionally biased stretch (polar residues) spans 739-751 (EPLSSKDSATSEG). The segment covering 753–773 (PPGPDAPPSKDVPPCQEPPPA) has biased composition (pro residues). Residues 877 to 906 (GDEEDAEEAEEVEEGEEGEEDEDEDTSDDN) show a composition bias toward acidic residues. A compositionally biased stretch (basic and acidic residues) spans 907–917 (YGERSEAKRSS). Phosphoserine occurs at positions 943, 946, 978, and 1007. Disordered regions lie at residues 1007–1026 (SGAD…KSKN) and 1032–1056 (KNKL…ADKM). The RGS domain maps to 1073-1198 (SLEKLLVHKY…INQKKMSPPL (126 aa)).

In terms of assembly, binds EFNB1 and EFNB2. Binds the GNB1-GNG2 heterodimer. Post-translationally, phosphorylated by cyclic GMP-dependent protein kinase. In terms of processing, ISGylated.

Its subcellular location is the cytoplasm. It localises to the nucleus. The protein resides in the cell membrane. Down-regulates signaling from heterotrimeric G-proteins by increasing the GTPase activity of the alpha subunits, thereby driving them into their inactive GDP-bound form. Down-regulates G-protein-mediated release of inositol phosphates and activation of MAP kinases. The chain is Regulator of G-protein signaling 3 (RGS3) from Homo sapiens (Human).